The following is a 466-amino-acid chain: MAKTLYEKLFDAHVVYEAENETPLLYIDRHLVHEVTSPQAFDGLRAHGRPVRQPGKTFATMDHNVSTQTKDINACGEMARIQMQELIKNCKEFGVELYDLNHPYQGIVHVMGPEQGVTLPGMTIVCGDSHTATHGAFGALAFGIGTSEVEHVLATQTLKQGRAKTMKIEVQGKAAPGITAKDIVLAIIGKTGSAGGTGHVVEFCGEAIRDLSMEGRMTLCNMAIEMGAKAGLVAPDETTFNYVKGRLHAPKGKDFDDAVAYWKTLQTDEGATFDTVVTLQAEEISPQVTWGTNPGQVISVNDNIPDPASFADPVERASAEKALAYMGLKPGILLTEVAIDKVFIGSCTNSRIEDLRAAAEIAKGRKVAPGVQALVVPGSGPVKAQAEAEGLDKIFIEAGFEWRLPGCSMCLAMNNDRLNPGERCASTSNRNFEGRQGRGGRTHLVSPAMAAAAAVTGHFADIRNIK.

Cysteine 347, cysteine 407, and cysteine 410 together coordinate [4Fe-4S] cluster.

Belongs to the aconitase/IPM isomerase family. LeuC type 1 subfamily. As to quaternary structure, heterodimer of LeuC and LeuD. The cofactor is [4Fe-4S] cluster.

The catalysed reaction is (2R,3S)-3-isopropylmalate = (2S)-2-isopropylmalate. It participates in amino-acid biosynthesis; L-leucine biosynthesis; L-leucine from 3-methyl-2-oxobutanoate: step 2/4. Catalyzes the isomerization between 2-isopropylmalate and 3-isopropylmalate, via the formation of 2-isopropylmaleate. This is 3-isopropylmalate dehydratase large subunit from Escherichia coli O157:H7.